Consider the following 327-residue polypeptide: FERM domain-containing protein 6 (327 aa).

An FERM domain is found at 16-320 (RRVCIFLPND…NSHRLYMNLQ (305 aa)).

It localises to the cytoplasm. Its subcellular location is the cell membrane. The protein is FERM domain-containing protein 6 (Frmd6) of Rattus norvegicus (Rat).